Reading from the N-terminus, the 246-residue chain is tRNA (guanine-N(1)-)-methyltransferase (246 aa).

Residues G114 and 134–139 (IGDYIL) each bind S-adenosyl-L-methionine.

It belongs to the RNA methyltransferase TrmD family. As to quaternary structure, homodimer.

The protein localises to the cytoplasm. It catalyses the reaction guanosine(37) in tRNA + S-adenosyl-L-methionine = N(1)-methylguanosine(37) in tRNA + S-adenosyl-L-homocysteine + H(+). Functionally, specifically methylates guanosine-37 in various tRNAs. This chain is tRNA (guanine-N(1)-)-methyltransferase, found in Coxiella burnetii (strain RSA 331 / Henzerling II).